The sequence spans 396 residues: Na(+)/H(+) antiporter NhaA 1 (396 aa).

11 helical membrane passes run 18-38, 60-80, 95-115, 126-146, 155-175, 178-198, 201-221, 262-282, 295-315, 333-353, and 362-382; these read LLLI…LSWL, LLLW…GLEV, IALP…IYTG, GWAI…ALLG, LFLL…IALF, ADLS…LFIL, TGVT…ICVL, VAYG…LAGI, IAAG…WIGV, GMAV…TLAL, and AARL…YYLL.

The protein belongs to the NhaA Na(+)/H(+) (TC 2.A.33) antiporter family.

The protein resides in the cell inner membrane. The enzyme catalyses Na(+)(in) + 2 H(+)(out) = Na(+)(out) + 2 H(+)(in). Functionally, na(+)/H(+) antiporter that extrudes sodium in exchange for external protons. In Syntrophotalea carbinolica (strain DSM 2380 / NBRC 103641 / GraBd1) (Pelobacter carbinolicus), this protein is Na(+)/H(+) antiporter NhaA 1.